Consider the following 148-residue polypeptide: Ribonuclease pancreatic (148 aa).

The N-terminal stretch at 1–25 is a signal peptide; that stretch reads MGLEKSLILLPLLVLVFGWVQSSLG. 2 residues coordinate substrate: Lys32 and Arg35. His36 functions as the Proton acceptor in the catalytic mechanism. 4 disulfides stabilise this stretch: Cys50–Cys108, Cys64–Cys119, Cys82–Cys134, and Cys89–Cys96. A glycan (N-linked (GlcNAc...) asparagine) is linked at Asn58. 65 to 69 is a binding site for substrate; it reads KPVNT. Asn86 carries N-linked (GlcNAc...) asparagine glycosylation. 2 residues coordinate substrate: Lys90 and Arg109. Catalysis depends on His143, which acts as the Proton donor.

Belongs to the pancreatic ribonuclease family. In terms of assembly, monomer. Interacts with and forms tight 1:1 complexes with RNH1. Dimerization of two such complexes may occur. Interaction with RNH1 inhibits this protein. In terms of tissue distribution, pancreas.

The protein localises to the secreted. The enzyme catalyses an [RNA] containing cytidine + H2O = an [RNA]-3'-cytidine-3'-phosphate + a 5'-hydroxy-ribonucleotide-3'-[RNA].. It carries out the reaction an [RNA] containing uridine + H2O = an [RNA]-3'-uridine-3'-phosphate + a 5'-hydroxy-ribonucleotide-3'-[RNA].. Its function is as follows. Endonuclease that catalyzes the cleavage of RNA on the 3' side of pyrimidine nucleotides. Acts on single-stranded and double-stranded RNA. The chain is Ribonuclease pancreatic (RNASE1) from Chionomys nivalis (European snow vole).